The chain runs to 181 residues: MKNNSIKTVVATGIGAALFVVIGHLINIPTFVPNTSIQLQYAVQSLLAVVFGPVVGFLVGFIGHTLKDSLTYGPWWSWILASGVFGLVVGLTKKRLRIQEGIFEGKDILFFNLVQIAANVLAWGVIAPVLDILIYSEAANKVFAQGLVAGIANSITIAIAGTLLLVVYAKSQTKTGSLSKD.

The next 5 helical transmembrane spans lie at 9–29 (VVAT…INIP), 46–66 (LLAV…GHTL), 70–90 (LTYG…LVVG), 108–128 (ILFF…VIAP), and 147–167 (LVAG…LLVV).

The protein belongs to the UPF0397 family.

The protein resides in the cell membrane. This chain is UPF0397 protein SSU98_0390, found in Streptococcus suis (strain 98HAH33).